The primary structure comprises 964 residues: Syndetin (964 aa).

Met-1 carries the post-translational modification N-acetylmethionine. The tract at residues 1-25 (MQKIKSLMTRQGLKSPPESLNDLGA) is disordered. Ser-15 carries the phosphoserine modification. 2 coiled-coil regions span residues 81–107 (LNLQ…VADL) and 216–244 (YSCI…LSKI). Phosphoserine occurs at positions 494, 498, 559, and 561. A disordered region spans residues 532–563 (DEETEDVLASNGYESDEQEKSAYQDYDSDSDV). Lys-963 is covalently cross-linked (Glycyl lysine isopeptide (Lys-Gly) (interchain with G-Cter in SUMO1); alternate). Lys-963 is covalently cross-linked (Glycyl lysine isopeptide (Lys-Gly) (interchain with G-Cter in SUMO2); alternate).

Belongs to the syndetin family. In terms of assembly, component of the endosome-associated retrograde protein (EARP) complex, composed of VPS51, VPS52, VPS53 and VPS50/Syndetin. The EARP complex interacts with EIPR1. Interacts with VPS51 and VPS53 in an EIPR1-independent manner. As to expression, expressed in the brain (at protein level).

It is found in the recycling endosome. Its subcellular location is the membrane. Its function is as follows. Acts as a component of the EARP complex that is involved in endocytic recycling. The EARP complex associates with Rab4-positive endosomes and promotes recycling of internalized transferrin receptor (TFRC) to the plasma membrane. Within the EARP complex, required to tether the complex to recycling endosomes. Not involved in retrograde transport from early and late endosomes to the trans-Golgi network (TGN). This chain is Syndetin, found in Rattus norvegicus (Rat).